The sequence spans 409 residues: Transcription termination factor 3, mitochondrial (409 aa).

A mitochondrion-targeting transit peptide spans 1-64 (MALLAQQLSR…KTDRALFSWS (64 aa)). The segment at 74-93 (RKSSTNSTLLPSVSEQPEKI) is disordered.

The protein belongs to the mTERF family.

It localises to the mitochondrion. Functionally, binds promoter DNA and regulates initiation of transcription. Required for normal mitochondrial transcription and translation, and for normal assembly of mitochondrial respiratory complexes. Required for normal mitochondrial function. Maintains 16S rRNA levels and functions in mitochondrial ribosome assembly by regulating the biogenesis of the 39S ribosomal subunit. This chain is Transcription termination factor 3, mitochondrial (Mterf3), found in Rattus norvegicus (Rat).